We begin with the raw amino-acid sequence, 211 residues long: Large ribosomal subunit protein uL3 (211 aa).

The protein belongs to the universal ribosomal protein uL3 family. Part of the 50S ribosomal subunit. Forms a cluster with proteins L14 and L19.

Functionally, one of the primary rRNA binding proteins, it binds directly near the 3'-end of the 23S rRNA, where it nucleates assembly of the 50S subunit. This is Large ribosomal subunit protein uL3 from Desulfatibacillum aliphaticivorans.